Reading from the N-terminus, the 150-residue chain is UPF0178 protein BceJ2315_16760 (150 aa).

It belongs to the UPF0178 family.

The chain is UPF0178 protein BceJ2315_16760 from Burkholderia cenocepacia (strain ATCC BAA-245 / DSM 16553 / LMG 16656 / NCTC 13227 / J2315 / CF5610) (Burkholderia cepacia (strain J2315)).